The chain runs to 132 residues: Holo-[acyl-carrier-protein] synthase (132 aa).

2 residues coordinate Mg(2+): D8 and E62.

It belongs to the P-Pant transferase superfamily. AcpS family. The cofactor is Mg(2+).

It localises to the cytoplasm. The catalysed reaction is apo-[ACP] + CoA = holo-[ACP] + adenosine 3',5'-bisphosphate + H(+). Transfers the 4'-phosphopantetheine moiety from coenzyme A to a Ser of acyl-carrier-protein. This Methylibium petroleiphilum (strain ATCC BAA-1232 / LMG 22953 / PM1) protein is Holo-[acyl-carrier-protein] synthase.